The chain runs to 1345 residues: Membrane-anchored lipid-binding protein LAM4 (1345 aa).

The Cytoplasmic portion of the chain corresponds to 1–1197 (MTRDSKKKHH…NFSSEIFMNK (1197 aa)). Disordered stretches follow at residues 51–80 (RVGGNPDIPSLLKPETFTESPAKGSQKAAA), 115–134 (SLKGRFQDGNSNSNSVPSLS), 139–164 (EKEKLQSGKREGSSNQAEEKTPDGHD), 190–302 (DADN…SLDD), 356–397 (LPEA…KPRR), 425–447 (SFNSSNGLTNNDPEYEDREPREM), and 489–531 (STII…NGRQ). Residue T66 is modified to Phosphothreonine. Residues 216-228 (SENSTNNKNTSST) are compositionally biased toward low complexity. Over residues 246–271 (SKSSTPSNQQLNTTEAGSKSKPSSLS) the composition is skewed to polar residues. Residues 283–294 (HSNSHSSSNAIS) show a composition bias toward low complexity. Residues 425–436 (SFNSSNGLTNND) show a composition bias toward polar residues. The segment covering 498–516 (SNGRPSSGLRRSSSKSFSS) has biased composition (low complexity). The GRAM domain occupies 549 to 616 (EFHAIFKDSG…FKTIVQIEKR (68 aa)). The span at 665–677 (SNSNNTNSSSNSI) shows a compositional bias: low complexity. The interval 665 to 722 (SNSNNTNSSSNSISDDENDDYDDDYDDYGDDDDDLYDNSNNISDSTDMTSSVSIGKPE) is disordered. Over residues 678-700 (SDDENDDYDDDYDDYGDDDDDLY) the composition is skewed to acidic residues. Position 747 is a phosphoserine (S747). VASt domains lie at 758–930 (NEKL…TRSA) and 967–1139 (DDSI…SRAK). The disordered stretch occupies residues 930–963 (ATKRKRSSKENTVTVSTLPKMEPSSHAPTEPDIQ). Over residues 1141 to 1158 (KKPVKKVMKSHDKHRPFH) the composition is skewed to basic residues. The segment at 1141–1172 (KKPVKKVMKSHDKHRPFHSKVEQKSSESRKSD) is disordered. A compositionally biased stretch (basic and acidic residues) spans 1159–1172 (SKVEQKSSESRKSD). Residues 1198 to 1218 (LLSPQKLFLILGLTIMLFWSP) form a helical membrane-spanning segment. Topologically, residues 1219 to 1345 (RLHVFQEKNN…NIERDANDLS (127 aa)) are lumenal.

The protein belongs to the YSP2 family.

It is found in the endoplasmic reticulum membrane. Functionally, may be involved in sterol transfer between intracellular membranes. In Saccharomyces cerevisiae (strain ATCC 204508 / S288c) (Baker's yeast), this protein is Membrane-anchored lipid-binding protein LAM4.